The following is a 449-amino-acid chain: Amidophosphoribosyltransferase (449 aa).

Residues 1–9 (MRGEIMKEK) constitute a propeptide that is removed on maturation. Cys-10 (nucleophile) is an active-site residue. The region spanning 10–224 (CGIFGAYSQD…PGEVIVVKDG (215 aa)) is the Glutamine amidotransferase type-2 domain. Cys-239 contacts [4Fe-4S] cluster. Residues Ser-286, Asp-346, and Asp-347 each coordinate Mg(2+). 3 residues coordinate [4Fe-4S] cluster: Cys-383, Cys-432, and Cys-435.

In the C-terminal section; belongs to the purine/pyrimidine phosphoribosyltransferase family. Mg(2+) serves as cofactor. The cofactor is [4Fe-4S] cluster.

It carries out the reaction 5-phospho-beta-D-ribosylamine + L-glutamate + diphosphate = 5-phospho-alpha-D-ribose 1-diphosphate + L-glutamine + H2O. Its pathway is purine metabolism; IMP biosynthesis via de novo pathway; N(1)-(5-phospho-D-ribosyl)glycinamide from 5-phospho-alpha-D-ribose 1-diphosphate: step 1/2. Its function is as follows. Catalyzes the formation of phosphoribosylamine from phosphoribosylpyrophosphate (PRPP) and glutamine. The protein is Amidophosphoribosyltransferase of Pyrococcus horikoshii (strain ATCC 700860 / DSM 12428 / JCM 9974 / NBRC 100139 / OT-3).